Reading from the N-terminus, the 462-residue chain is MGKEKAHVNVVVIGHVDSGKSTTTGHLIYKCGGIDKRTIEKFEKEAAELGKGSFKYAWVLDKLKAERERGITIDIALWKSETPKYMVTVIDAPGHRDFIKNMITGTSQADCAILIIAGGTGEFEAGISKDGQTREHALLAFTLGVRQLIVAVNKMDTTNWSEARFNEIVKETSNFIKKVGYNPKTVAFVPISGWHGDNMLEPSTNMPWYKGWSKEVKGSSSPATGKTLVDAIDAIEPPVRPSDKPLRLPLQDVYKIGGIGTVPVGRVETGIIKPGMVVSFAPSNVTTEVKSVEMHHEQLAEGLPGDNVGFNVKNVSVKDIRRGDVASDSKNDPAKEAASFNAQVIVLNHPGQIGAGYAPVLDCHTAHIACKFSELIEKIDRRTGKTMEAAPKFVKSGDAAIVKLVPSKPMCVESYNEYPPLGRFAVRDMRQTVAVGVIKSVEKTEGKGGKVTKSAEKAAKKK.

A N,N,N-trimethylglycine modification is found at glycine 2. Lysine 3 carries the post-translational modification N6,N6-dimethyllysine; alternate. An N6-methyllysine; alternate modification is found at lysine 3. The 238-residue stretch at 5–242 (KAHVNVVVIG…DAIEPPVRPS (238 aa)) folds into the tr-type G domain. The segment at 14 to 21 (GHVDSGKS) is G1. GTP is bound at residue 14-21 (GHVDSGKS). Position 30 is an N6-methyllysine (lysine 30). A G2 region spans residues 70–74 (GITID). Lysine 79 carries the post-translational modification N6,N6,N6-trimethyllysine. A G3 region spans residues 91–94 (DAPG). Residues 91–95 (DAPGH) and 153–156 (NKMD) contribute to the GTP site. The segment at 153 to 156 (NKMD) is G4. The G5 stretch occupies residues 192–194 (SGW). Lysine 318 is subject to N6,N6-dimethyllysine; alternate. Lysine 318 is modified (N6-methyllysine; alternate). An N6-methyllysine modification is found at lysine 392.

Belongs to the TRAFAC class translation factor GTPase superfamily. Classic translation factor GTPase family. EF-Tu/EF-1A subfamily.

Its subcellular location is the cytoplasm. Its function is as follows. This protein promotes the GTP-dependent binding of aminoacyl-tRNA to the A-site of ribosomes during protein biosynthesis. The protein is Elongation factor 1-alpha (TEF1) of Serendipita indica (Root endophyte fungus).